Consider the following 330-residue polypeptide: MALFNFQKPDKVIMIDSTDFEGKFEFRPLEPGYGLTVGNALRRVLLSALEGYAITSIRIEGVDHEFSTIPGVVEDVTEIILSLKQVRFKRQIEDIDNESVTIAISGKNQITAGDFQKYISGFQVLNPELVICNLDSKVNFNMEMTIEKGRGYVPAEENKKQNAAIGTIFTDSIFTPVKNVKYAIENFRVEQKTDYEKLVFEIKTDGSINPKDALTEAAKVLIHHFMLFSDERITLEADEIAQTESYDEESLHMRQLLKTKLVDMDLSVRALNCLKAAEVDTLGDLVSFNKNDLMKFRNFGKKSLTELDELVAIKNLTFGMDLAKYKLDKE.

The segment at 1 to 231 (MALFNFQKPD…IHHFMLFSDE (231 aa)) is alpha N-terminal domain (alpha-NTD). Positions 253–330 (MRQLLKTKLV…DLAKYKLDKE (78 aa)) are alpha C-terminal domain (alpha-CTD).

Belongs to the RNA polymerase alpha chain family. In terms of assembly, homodimer. The RNAP catalytic core consists of 2 alpha, 1 beta, 1 beta' and 1 omega subunit. When a sigma factor is associated with the core the holoenzyme is formed, which can initiate transcription.

The enzyme catalyses RNA(n) + a ribonucleoside 5'-triphosphate = RNA(n+1) + diphosphate. Functionally, DNA-dependent RNA polymerase catalyzes the transcription of DNA into RNA using the four ribonucleoside triphosphates as substrates. This Flavobacterium psychrophilum (strain ATCC 49511 / DSM 21280 / CIP 103535 / JIP02/86) protein is DNA-directed RNA polymerase subunit alpha.